The sequence spans 141 residues: Hemoglobin subunit beta-C (141 aa).

The Globin domain occupies 1-141; the sequence is PNKALITGFW…VASALAHRYH (141 aa). Heme b-binding residues include His-58 and His-87.

Belongs to the globin family. In terms of assembly, heterotetramer of two alpha chains and two beta chains. As to expression, red blood cells.

In terms of biological role, involved in oxygen transport from the lung to the various peripheral tissues. The chain is Hemoglobin subunit beta-C (HBBC) from Ovis aries musimon (Mouflon).